The sequence spans 239 residues: Demethylmenaquinone methyltransferase (239 aa).

S-adenosyl-L-methionine-binding positions include Thr60, Asp81, and 106–107 (DA).

It belongs to the class I-like SAM-binding methyltransferase superfamily. MenG/UbiE family.

It carries out the reaction a 2-demethylmenaquinol + S-adenosyl-L-methionine = a menaquinol + S-adenosyl-L-homocysteine + H(+). It functions in the pathway quinol/quinone metabolism; menaquinone biosynthesis; menaquinol from 1,4-dihydroxy-2-naphthoate: step 2/2. Functionally, methyltransferase required for the conversion of demethylmenaquinol (DMKH2) to menaquinol (MKH2). This Staphylococcus haemolyticus (strain JCSC1435) protein is Demethylmenaquinone methyltransferase.